The chain runs to 300 residues: Acetylglutamate kinase (300 aa).

Substrate is bound by residues 68-69 (GG), arginine 90, and asparagine 195.

Belongs to the acetylglutamate kinase family. ArgB subfamily.

Its subcellular location is the cytoplasm. The catalysed reaction is N-acetyl-L-glutamate + ATP = N-acetyl-L-glutamyl 5-phosphate + ADP. It participates in amino-acid biosynthesis; L-arginine biosynthesis; N(2)-acetyl-L-ornithine from L-glutamate: step 2/4. Catalyzes the ATP-dependent phosphorylation of N-acetyl-L-glutamate. In Azotobacter vinelandii (strain DJ / ATCC BAA-1303), this protein is Acetylglutamate kinase.